Consider the following 418-residue polypeptide: Torsin-4A-B (418 aa).

The chain crosses the membrane as a helical span at residues 128-144 (CLLLFVGIVCFQIFNAI). Position 200–207 (200–207 (GPSGVGKS)) interacts with ATP.

This sequence belongs to the ClpA/ClpB family. Torsin subfamily.

The protein resides in the membrane. This Xenopus laevis (African clawed frog) protein is Torsin-4A-B (tor4a-b).